The primary structure comprises 223 residues: Deoxyribose-phosphate aldolase (223 aa).

Aspartate 89 serves as the catalytic Proton donor/acceptor. The Schiff-base intermediate with acetaldehyde role is filled by lysine 152. The active-site Proton donor/acceptor is the lysine 181.

This sequence belongs to the DeoC/FbaB aldolase family. DeoC type 1 subfamily.

The protein localises to the cytoplasm. It catalyses the reaction 2-deoxy-D-ribose 5-phosphate = D-glyceraldehyde 3-phosphate + acetaldehyde. It functions in the pathway carbohydrate degradation; 2-deoxy-D-ribose 1-phosphate degradation; D-glyceraldehyde 3-phosphate and acetaldehyde from 2-deoxy-alpha-D-ribose 1-phosphate: step 2/2. In terms of biological role, catalyzes a reversible aldol reaction between acetaldehyde and D-glyceraldehyde 3-phosphate to generate 2-deoxy-D-ribose 5-phosphate. The chain is Deoxyribose-phosphate aldolase from Bacillus mycoides (strain KBAB4) (Bacillus weihenstephanensis).